The chain runs to 640 residues: 1-deoxy-D-xylulose-5-phosphate synthase (640 aa).

Residues His79 and 120–122 (AHA) each bind thiamine diphosphate. Asp151 provides a ligand contact to Mg(2+). Thiamine diphosphate contacts are provided by residues 152 to 153 (GS), Asn180, Tyr287, and Glu369. Asn180 serves as a coordination point for Mg(2+).

Belongs to the transketolase family. DXPS subfamily. In terms of assembly, homodimer. It depends on Mg(2+) as a cofactor. Requires thiamine diphosphate as cofactor.

It carries out the reaction D-glyceraldehyde 3-phosphate + pyruvate + H(+) = 1-deoxy-D-xylulose 5-phosphate + CO2. It participates in metabolic intermediate biosynthesis; 1-deoxy-D-xylulose 5-phosphate biosynthesis; 1-deoxy-D-xylulose 5-phosphate from D-glyceraldehyde 3-phosphate and pyruvate: step 1/1. In terms of biological role, catalyzes the acyloin condensation reaction between C atoms 2 and 3 of pyruvate and glyceraldehyde 3-phosphate to yield 1-deoxy-D-xylulose-5-phosphate (DXP). This chain is 1-deoxy-D-xylulose-5-phosphate synthase, found in Hyphomonas neptunium (strain ATCC 15444).